A 256-amino-acid polypeptide reads, in one-letter code: Non-specific lipid transfer protein GPI-anchored 23 (256 aa).

Residues 1–21 form the signal peptide; it reads MKPSFVLLSIVLLLSSSLSDA. Asparagine 41 carries N-linked (GlcNAc...) asparagine glycosylation. 4 disulfide bridges follow: cysteine 45/cysteine 88, cysteine 55/cysteine 72, cysteine 73/cysteine 113, and cysteine 86/cysteine 121. A disordered region spans residues 125–230; it reads TPAASTPVSP…SPSPSPSPSI (106 aa). Positions 138–230 are enriched in low complexity; that stretch reads SPTTSPSSAK…SPSPSPSPSI (93 aa). The GPI-anchor amidated serine moiety is linked to residue serine 225. The propeptide at 226 to 256 is removed in mature form; that stretch reads PSPSISSSGILLVSKLFIAVVMVSSFLYILA.

This sequence belongs to the plant LTP family. In terms of tissue distribution, confined to the anthers of the inflorescence.

It is found in the cell membrane. In terms of biological role, probable lipid transfer protein. The protein is Non-specific lipid transfer protein GPI-anchored 23 of Arabidopsis thaliana (Mouse-ear cress).